A 301-amino-acid chain; its full sequence is uncharacterized protein (301 aa).

A signal peptide spans 1–21 (MKIKLILVLIVFLTIVNVNNS). Residues Asn-19, Asn-59, Asn-102, and Asn-180 are each glycosylated (N-linked (GlcNAc...) asparagine).

It is found in the secreted. This is an uncharacterized protein from Dictyostelium discoideum (Social amoeba).